We begin with the raw amino-acid sequence, 1404 residues long: DNA-directed RNA polymerase subunit beta' (1404 aa).

Zn(2+) contacts are provided by Cys-70, Cys-72, Cys-85, and Cys-88. Positions 460, 462, and 464 each coordinate Mg(2+). 4 residues coordinate Zn(2+): Cys-814, Cys-888, Cys-895, and Cys-898.

It belongs to the RNA polymerase beta' chain family. In terms of assembly, the RNAP catalytic core consists of 2 alpha, 1 beta, 1 beta' and 1 omega subunit. When a sigma factor is associated with the core the holoenzyme is formed, which can initiate transcription. Requires Mg(2+) as cofactor. Zn(2+) is required as a cofactor.

The enzyme catalyses RNA(n) + a ribonucleoside 5'-triphosphate = RNA(n+1) + diphosphate. Functionally, DNA-dependent RNA polymerase catalyzes the transcription of DNA into RNA using the four ribonucleoside triphosphates as substrates. In Buchnera aphidicola subsp. Baizongia pistaciae (strain Bp), this protein is DNA-directed RNA polymerase subunit beta'.